The primary structure comprises 203 residues: Non-specific lipid transfer protein GPI-anchored 20 (203 aa).

Positions M1–G21 are cleaved as a signal peptide. 4 cysteine pairs are disulfide-bonded: C29-C74, C40-C58, C59-C99, and C72-C108. N46, N50, and N88 each carry an N-linked (GlcNAc...) asparagine glycan. Residues G119–S182 form a disordered region. 2 stretches are compositionally biased toward polar residues: residues A144–F156 and D169–T179. S172 carries GPI-anchor amidated serine lipidation. Positions T173–Y203 are cleaved as a propeptide — removed in mature form.

The protein belongs to the plant LTP family. In terms of tissue distribution, expressed in seedlings, preferentially in hypocotyls and roots. Also observed in siliques and sepals.

It localises to the cell membrane. Its function is as follows. Probable lipid transfer protein. The chain is Non-specific lipid transfer protein GPI-anchored 20 from Arabidopsis thaliana (Mouse-ear cress).